The primary structure comprises 465 residues: CUGBP Elav-like family member 3 (465 aa).

RRM domains are found at residues 7-88 and 95-174; these read IKLF…PADS and KLFV…FADT. Disordered stretches follow at residues 283–311 and 345–379; these read PVPT…QSPA and PPAL…GPDG. Pro residues predominate over residues 345–358; sequence PPALVAQQPPPPPQ. Over residues 359-373 the composition is skewed to low complexity; the sequence is QQQQQQQQQQQQQQQ. The 79-residue stretch at 380 to 458 folds into the RRM 3 domain; sequence CNIFIYHLPQ…KRLKVQLKRP (79 aa).

The protein belongs to the CELF/BRUNOL family.

The protein localises to the nucleus. It is found in the cytoplasm. Its function is as follows. RNA-binding protein involved in the regulation of pre-mRNA alternative splicing. Mediates exon inclusion and/or exclusion in pre-mRNA that are subject to tissue-specific and developmentally regulated alternative splicing. Specifically activates exon 5 inclusion of cardiac isoforms of TNNT2 during heart remodeling at the juvenile to adult transition. Activates the splicing of MAPT/Tau exon 10. Binds to muscle-specific splicing enhancer (MSE) intronic sites flanking the alternative exon 5 of TNNT2 pre-mRNA. In Mus musculus (Mouse), this protein is CUGBP Elav-like family member 3 (Celf3).